The chain runs to 677 residues: MPPKSRLSRIRNIGIIAHIDAGKTTVSERILYYTGKSYKIGEVHDGEAVMDWMPQEQERGITISSAVTTCNWANHEIHIIDTPGHVDFTIEVERSLRVLDGAVVVFDAVAGVEPQSETVWHQADKYGVPKIAFINKMDRVGADYFRVVKMMKERFASVPLPIQIPLGQQDQFLGVVDLIREKVVTWDDGSKGVNYQYSEIPGDREADAKANREIMLEILAEVDDGIAEKYLEGEEISESDLLRAIREATLANRLVPVMCGSALKNKGIQPVLDAVVNFLPSPEDVPPVRGIHPATKEELSRASSVKEPLSALAFKVMQDEGRKLTYIRIYSGQMKAGEELYNAGKKKKEKASRLLKMHANKRERLEQAGAGDIVAVMGLKETVTGDTICDEKNPILLESMEFYEPVISQAIEAKTPADQEKLSLALLKLMEEDPTLRVKYDEETAQTVISGMGELHLEVVIDRLGREFNAHVNVGKPRVVHRETIRNKVDVEGHFERELGDKKHFGHVRLVLEPKERGSGVEIEWKADTAILPAEYVKAVEEGIQESLVSGAVAGYPVVDIRIKILEVGLKEGESSPIGYKIAASSAFRDGCIKGESVLLQPIMAVNVITPAEFMGDVIGDINARKGEIQTITPKGAMCEIRALVPLKALFGYSTDLRSATQGRAVFTMQFYAYDQG.

The region spanning 8-283 (SRIRNIGIIA…AVVNFLPSPE (276 aa)) is the tr-type G domain. Residues 17-24 (AHIDAGKT), 81-85 (DTPGH), and 135-138 (NKMD) contribute to the GTP site.

This sequence belongs to the TRAFAC class translation factor GTPase superfamily. Classic translation factor GTPase family. EF-G/EF-2 subfamily.

The protein resides in the cytoplasm. Functionally, catalyzes the GTP-dependent ribosomal translocation step during translation elongation. During this step, the ribosome changes from the pre-translocational (PRE) to the post-translocational (POST) state as the newly formed A-site-bound peptidyl-tRNA and P-site-bound deacylated tRNA move to the P and E sites, respectively. Catalyzes the coordinated movement of the two tRNA molecules, the mRNA and conformational changes in the ribosome. The sequence is that of Elongation factor G 2 from Syntrophus aciditrophicus (strain SB).